We begin with the raw amino-acid sequence, 491 residues long: Glycogen synthase (491 aa).

Arginine 20 contributes to the ADP-alpha-D-glucose binding site.

It belongs to the glycosyltransferase 1 family. Bacterial/plant glycogen synthase subfamily.

It catalyses the reaction [(1-&gt;4)-alpha-D-glucosyl](n) + ADP-alpha-D-glucose = [(1-&gt;4)-alpha-D-glucosyl](n+1) + ADP + H(+). Its pathway is glycan biosynthesis; glycogen biosynthesis. Functionally, synthesizes alpha-1,4-glucan chains using ADP-glucose. The polypeptide is Glycogen synthase (Prosthecochloris aestuarii (strain DSM 271 / SK 413)).